The sequence spans 1250 residues: Immunoglobulin superfamily DCC subclass member 4 (1250 aa).

Positions 1–24 (MARGDAGRGRGLLALTFCLLAARG) are cleaved as a signal peptide. The Extracellular segment spans residues 25 to 957 (ELLLPQETTV…SDSLDMHSVT (933 aa)). Ig-like C2-type domains are found at residues 29–137 (PQET…TAVV), 143–229 (ADFS…ALLS), 242–330 (QDVV…AELR), and 335–421 (PAIT…ASLA). Cys57 and Cys121 form a disulfide bridge. N-linked (GlcNAc...) asparagine glycosylation is found at Asn90, Asn102, and Asn157. Cys164 and Cys212 are joined by a disulfide. Asn252 carries an N-linked (GlcNAc...) asparagine glycan. Disulfide bonds link Cys265/Cys312 and Cys356/Cys405. Fibronectin type-III domains lie at 431–525 (APTR…TLDD), 527–623 (PSAA…TPSM), 632–741 (APAE…APAP), 752–845 (PPAH…TLPD), and 850–945 (PPSD…TLQE). Asn582 carries N-linked (GlcNAc...) asparagine glycosylation. The helical transmembrane segment at 958-978 (GIIVGVCLGLLCLLACMCAGL) threads the bilayer. Over 979-1250 (RRSPHRESLP…LPRSPVSSSA (272 aa)) the chain is Cytoplasmic. At Thr995 the chain carries Phosphothreonine. Disordered regions lie at residues 1140–1175 (SASNGNPDLHLQDLEPEDPLPPEAPDLISGVGDPGQ) and 1215–1250 (PGEVLEETPGDSCQLKSPCPLGASPGLPRSPVSSSA).

This sequence belongs to the immunoglobulin superfamily. DCC family.

Its subcellular location is the cell membrane. In Homo sapiens (Human), this protein is Immunoglobulin superfamily DCC subclass member 4 (IGDCC4).